The following is a 572-amino-acid chain: Butyrate--CoA ligase AAE11, peroxisomal (572 aa).

The short motif at Ser-570 to Leu-572 is the Microbody targeting signal element.

The protein belongs to the ATP-dependent AMP-binding enzyme family. As to expression, expressed in flowers.

It is found in the peroxisome. It carries out the reaction a medium-chain fatty acid + ATP + CoA = a medium-chain fatty acyl-CoA + AMP + diphosphate. Butyrate--CoA ligase that is active in vitro with medium-chain fatty acids, with a preference for hexanoate and octanoate. In Arabidopsis thaliana (Mouse-ear cress), this protein is Butyrate--CoA ligase AAE11, peroxisomal (AAE11).